The sequence spans 328 residues: Alanine racemase (328 aa).

Residue Lys33 is the Proton acceptor; specific for D-alanine of the active site. Lys33 bears the N6-(pyridoxal phosphate)lysine mark. Arg118 serves as a coordination point for substrate. The Proton acceptor; specific for L-alanine role is filled by Tyr237. Substrate is bound at residue Met283.

This sequence belongs to the alanine racemase family. Pyridoxal 5'-phosphate is required as a cofactor.

It catalyses the reaction L-alanine = D-alanine. It participates in amino-acid biosynthesis; D-alanine biosynthesis; D-alanine from L-alanine: step 1/1. In terms of biological role, catalyzes the interconversion of L-alanine and D-alanine. May also act on other amino acids. This chain is Alanine racemase (alr), found in Campylobacter jejuni (strain RM1221).